Consider the following 575-residue polypeptide: Phosphoenolpyruvate-protein phosphotransferase (575 aa).

The active-site Tele-phosphohistidine intermediate is His191. Residues Arg298 and Arg334 each contribute to the phosphoenolpyruvate site. Mg(2+)-binding residues include Glu435 and Asp459. Residues 458–459 (ND) and Arg469 each bind phosphoenolpyruvate. Residue Cys506 is the Proton donor of the active site.

The protein belongs to the PEP-utilizing enzyme family. Homodimer. It depends on Mg(2+) as a cofactor.

It localises to the cytoplasm. It carries out the reaction L-histidyl-[protein] + phosphoenolpyruvate = N(pros)-phospho-L-histidyl-[protein] + pyruvate. Functionally, general (non sugar-specific) component of the phosphoenolpyruvate-dependent sugar phosphotransferase system (sugar PTS). This major carbohydrate active-transport system catalyzes the phosphorylation of incoming sugar substrates concomitantly with their translocation across the cell membrane. Enzyme I transfers the phosphoryl group from phosphoenolpyruvate (PEP) to the phosphoryl carrier protein (HPr). This Enterococcus faecalis (strain ATCC 700802 / V583) protein is Phosphoenolpyruvate-protein phosphotransferase (ptsI).